Here is a 291-residue protein sequence, read N- to C-terminus: Porphobilinogen deaminase (291 aa).

Cysteine 233 carries the post-translational modification S-(dipyrrolylmethanemethyl)cysteine.

The protein belongs to the HMBS family. Monomer. Requires dipyrromethane as cofactor.

It carries out the reaction 4 porphobilinogen + H2O = hydroxymethylbilane + 4 NH4(+). Its pathway is porphyrin-containing compound metabolism; protoporphyrin-IX biosynthesis; coproporphyrinogen-III from 5-aminolevulinate: step 2/4. Tetrapolymerization of the monopyrrole PBG into the hydroxymethylbilane pre-uroporphyrinogen in several discrete steps. The sequence is that of Porphobilinogen deaminase (hemC) from Ruminiclostridium josui (Clostridium josui).